The following is a 378-amino-acid chain: MANSANTNTVPKLYRSVIEDVINDVRDIFLDDGVDEQVLMELKTLWENKLMQSRAVDGFHSEEQQLLLQVQQQHQPQQQQHHHHHHQHQQAQPQQTVPQQAQTQQVLIPASQQATAPQVIVPDSKLLQHMNASSITSAAATAATLALPAGVTPVQQLLTNSGQLLQVVRAANGAQYILQPQQSVVLQQQVIPQMQPGGVQAPVIQQVLAPLPGGISPQTGVIIQPQQILFTGNKTQVIPTTVAAPAPAQAPMPAAGQQQPQAQPAQQQAPLVLQVDGTGDTSSEEDEDEEEDYDDDEEEDKEKDGAEDGQVEEEPLNSEDDVSDEEGQELFDTENVVVCQYDKIHRSKNKWKFHLKDGIMNLNGRDYIFSKAIGDAEW.

Alanine 2 bears the N-acetylalanine mark. Low complexity-rich tracts occupy residues 69–79, 89–106, and 247–281; these read QVQQQHQPQQQ, QQAQ…TQQV, and PAQA…TGDT. Disordered regions lie at residues 69-108 and 247-331; these read QVQQ…QVLI and PAQA…QELF. Phosphoserine; by TAF1 is present on residues serine 282, serine 283, serine 318, and serine 323. Residues 282–331 are compositionally biased toward acidic residues; the sequence is SSEEDEDEEEDYDDDEEEDKEKDGAEDGQVEEEPLNSEDDVSDEEGQELF. Positions 345 and 346 each coordinate DNA.

Belongs to the TFIIA subunit 1 family. As to quaternary structure, TFIIA is a heterodimer of the large unprocessed subunit 1 and a small subunit gamma. It was originally believed to be a heterotrimer of an alpha (p35), a beta (p19) and a gamma subunit (p12). TFIIA forms a complex with TBP. Part of TBP-based Pol II pre-initiation complex (PIC), in which Pol II core assembles with general transcription factors and other specific initiation factors including GTF2E1, GTF2E2, GTF2F1, GTF2F2, TCEA1, ERCC2, ERCC3, GTF2H2, GTF2H3, GTF2H4, GTF2H5, GTF2A1, GTF2A2, GTF2B and TBP; this large multi-subunit PIC complex mediates DNA unwinding and targets Pol II core to the transcription start site where the first phosphodiester bond forms. In terms of processing, the alpha and beta subunits are postranslationally produced from the precursor form by TASP1. The cleavage promotes proteasomal degradation. Expressed in pachytene spermatocytes and spermatids.

The protein resides in the nucleus. TFIIA is a component of the transcription machinery of RNA polymerase II and plays an important role in transcriptional activation. TFIIA in a complex with TBP mediates transcriptional activity. The sequence is that of Transcription initiation factor IIA subunit 1 (Gtf2a1) from Mus musculus (Mouse).